The chain runs to 221 residues: uncharacterized protein (221 aa).

A signal peptide spans 1-26 (MVRLVPRAFAATVALLAAGFSPATAS).

This is an uncharacterized protein from Mycobacterium tuberculosis (strain ATCC 25618 / H37Rv).